A 128-amino-acid polypeptide reads, in one-letter code: UPF0102 protein PSPTO_4420 (128 aa).

It belongs to the UPF0102 family.

This Pseudomonas syringae pv. tomato (strain ATCC BAA-871 / DC3000) protein is UPF0102 protein PSPTO_4420.